A 153-amino-acid chain; its full sequence is Hydrogenase expression/formation protein HoxT (153 aa).

The protein belongs to the HupJ family.

The protein is Hydrogenase expression/formation protein HoxT (hoxT) of Azotobacter vinelandii.